The following is a 262-amino-acid chain: Sperm microtubule inner protein 6 (262 aa).

The protein belongs to the SPMIP6 family. In terms of assembly, microtubule inner protein component of sperm flagellar doublet microtubules. Interacts with alpha-tubulin. Expressed in testis. Strongly expressed in ciliated epithelial cells with lower levels in goblet cells (at protein level).

The protein resides in the cytoplasm. Its subcellular location is the cytoskeleton. It localises to the nucleus. The protein localises to the mitochondrion. It is found in the flagellum axoneme. In terms of biological role, may participate in intramanchette transport and midpiece formation of the sperm tail. May play a potential role in somatic cell proliferation. This is Sperm microtubule inner protein 6 from Homo sapiens (Human).